We begin with the raw amino-acid sequence, 419 residues long: UDP-N-acetylglucosamine 1-carboxyvinyltransferase (419 aa).

22–23 (KN) provides a ligand contact to phosphoenolpyruvate. Residue R95 coordinates UDP-N-acetyl-alpha-D-glucosamine. Residue C119 is the Proton donor of the active site. C119 carries the 2-(S-cysteinyl)pyruvic acid O-phosphothioketal modification. UDP-N-acetyl-alpha-D-glucosamine is bound by residues 164 to 167 (KVSV), D308, and I330.

This sequence belongs to the EPSP synthase family. MurA subfamily.

Its subcellular location is the cytoplasm. It catalyses the reaction phosphoenolpyruvate + UDP-N-acetyl-alpha-D-glucosamine = UDP-N-acetyl-3-O-(1-carboxyvinyl)-alpha-D-glucosamine + phosphate. Its pathway is cell wall biogenesis; peptidoglycan biosynthesis. Cell wall formation. Adds enolpyruvyl to UDP-N-acetylglucosamine. In Rickettsia massiliae (strain Mtu5), this protein is UDP-N-acetylglucosamine 1-carboxyvinyltransferase.